The sequence spans 384 residues: 8-amino-7-oxononanoate synthase (384 aa).

Arginine 21 serves as a coordination point for substrate. 108 to 109 is a binding site for pyridoxal 5'-phosphate; the sequence is GF. Histidine 133 serves as a coordination point for substrate. Pyridoxal 5'-phosphate contacts are provided by serine 179, histidine 207, and threonine 233. Lysine 236 carries the N6-(pyridoxal phosphate)lysine modification. Threonine 352 contributes to the substrate binding site.

It belongs to the class-II pyridoxal-phosphate-dependent aminotransferase family. BioF subfamily. As to quaternary structure, homodimer. It depends on pyridoxal 5'-phosphate as a cofactor.

The catalysed reaction is 6-carboxyhexanoyl-[ACP] + L-alanine + H(+) = (8S)-8-amino-7-oxononanoate + holo-[ACP] + CO2. The protein operates within cofactor biosynthesis; biotin biosynthesis. In terms of biological role, catalyzes the decarboxylative condensation of pimeloyl-[acyl-carrier protein] and L-alanine to produce 8-amino-7-oxononanoate (AON), [acyl-carrier protein], and carbon dioxide. The protein is 8-amino-7-oxononanoate synthase of Escherichia coli (strain SE11).